A 588-amino-acid polypeptide reads, in one-letter code: WD repeat-containing protein DDB_G0349043 (588 aa).

The interval 1–32 (MPLDNKVQLNENGKEVNNNNNNDEDLKIQDNH) is disordered. The 33-residue stretch at 40 to 72 (NRSELVRLLIQSLNSLGYDKSAEFLEKDSGISL) folds into the LisH domain. One can recognise a CTLH domain in the interval 73 to 129 (QSKEINQFSECVVSGDWNKVEELLPFLKLNEFDTNNVKFLVYSQKFLEYLENHKIKE). WD repeat units follow at residues 244–283 (KHRD…LDQP), 294–333 (GHTK…LLKT), and 336–375 (KHSD…LTNS). The disordered stretch occupies residues 376 to 403 (NNNNNNHNNNNSNINGNSINGSNNNGNN). 4 WD repeats span residues 413 to 452 (WACA…TPEV), 455 to 494 (METD…IVQK), 499 to 539 (KQGR…LLET), and 542 to 582 (RHSG…NSFI).

This is WD repeat-containing protein DDB_G0349043 from Dictyostelium discoideum (Social amoeba).